A 282-amino-acid chain; its full sequence is ATP synthase subunit a (282 aa).

Transmembrane regions (helical) follow at residues 45–65 (AIHV…LWLF), 106–126 (IAPL…MDLI), 160–179 (INAT…FYSI), 232–252 (LIFI…SVPW), and 253–273 (AIFH…LTIV).

It belongs to the ATPase A chain family. In terms of assembly, F-type ATPases have 2 components, CF(1) - the catalytic core - and CF(0) - the membrane proton channel. CF(1) has five subunits: alpha(3), beta(3), gamma(1), delta(1), epsilon(1). CF(0) has three main subunits: a(1), b(2) and c(9-12). The alpha and beta chains form an alternating ring which encloses part of the gamma chain. CF(1) is attached to CF(0) by a central stalk formed by the gamma and epsilon chains, while a peripheral stalk is formed by the delta and b chains.

The protein localises to the cell inner membrane. Its function is as follows. Key component of the proton channel; it plays a direct role in the translocation of protons across the membrane. In Marinomonas sp. (strain MWYL1), this protein is ATP synthase subunit a.